The following is a 152-amino-acid chain: MANSERTFIAIKPDGVQRSLVGEIIKRFEQKGFRLIAMKLIQASEDLLKEHYIDLKDRPFFAGLVKYMQSGPVVAMVWEGLNVVKTGRVMLGETNPADSKPGTIRGDFCIQVGRNIIHGSDSVESAEKEIGLWFQPEELVDYKSCAQNWIYE.

Residues lysine 12, phenylalanine 60, arginine 88, and threonine 94 each contribute to the ATP site. Lysine 100 is covalently cross-linked (Glycyl lysine isopeptide (Lys-Gly) (interchain with G-Cter in ubiquitin)). Residues arginine 105 and asparagine 115 each contribute to the ATP site. Catalysis depends on histidine 118, which acts as the Pros-phosphohistidine intermediate. Phosphoserine occurs at positions 120, 122, and 125.

Belongs to the NDK family. In terms of assembly, hexamer of two different chains: An and B (A6, A5B, A4B2, A3B3, A2B4, AB5, B6). Interacts with PRUNE1. Component of the SET complex, composed of at least ANP32A, APEX1, HMGB2, NME1, SET and TREX1. Within this complex, interacts directly with SET. Also interacts with TREX1, but only following translocation to the nucleus. It depends on Mg(2+) as a cofactor.

The protein resides in the cytoplasm. It is found in the nucleus. The enzyme catalyses a 2'-deoxyribonucleoside 5'-diphosphate + ATP = a 2'-deoxyribonucleoside 5'-triphosphate + ADP. The catalysed reaction is a ribonucleoside 5'-diphosphate + ATP = a ribonucleoside 5'-triphosphate + ADP. Its activity is regulated as follows. Autophosphorylation at His-118 increases serine/threonine protein kinase activity of the enzyme. Interaction with the SET complex inhibits exonuclease activity. Its function is as follows. Major role in the synthesis of nucleoside triphosphates other than ATP. The ATP gamma phosphate is transferred to the NDP beta phosphate via a ping-pong mechanism, using a phosphorylated active-site intermediate. Possesses nucleoside-diphosphate kinase, serine/threonine-specific protein kinase, geranyl and farnesyl pyrophosphate kinase, histidine protein kinase and 3'-5' exonuclease activities. Involved in cell proliferation, differentiation and development, signal transduction, G protein-coupled receptor endocytosis, and gene expression. Required for neural development including neural patterning and cell fate determination. During GZMA-mediated cell death, works in concert with TREX1. NME1 nicks one strand of DNA and TREX1 removes bases from the free 3' end to enhance DNA damage and prevent DNA end reannealing and rapid repair. This is Nucleoside diphosphate kinase A (NME1) from Canis lupus familiaris (Dog).